Consider the following 50-residue polypeptide: Large ribosomal subunit protein bL33B (50 aa).

The protein belongs to the bacterial ribosomal protein bL33 family.

The sequence is that of Large ribosomal subunit protein bL33B from Streptococcus agalactiae serotype V (strain ATCC BAA-611 / 2603 V/R).